The primary structure comprises 283 residues: Bifunctional protein FolD (283 aa).

NADP(+) contacts are provided by residues 166–168 (GRS) and serine 191.

The protein belongs to the tetrahydrofolate dehydrogenase/cyclohydrolase family. As to quaternary structure, homodimer.

It carries out the reaction (6R)-5,10-methylene-5,6,7,8-tetrahydrofolate + NADP(+) = (6R)-5,10-methenyltetrahydrofolate + NADPH. The enzyme catalyses (6R)-5,10-methenyltetrahydrofolate + H2O = (6R)-10-formyltetrahydrofolate + H(+). It participates in one-carbon metabolism; tetrahydrofolate interconversion. Its function is as follows. Catalyzes the oxidation of 5,10-methylenetetrahydrofolate to 5,10-methenyltetrahydrofolate and then the hydrolysis of 5,10-methenyltetrahydrofolate to 10-formyltetrahydrofolate. This is Bifunctional protein FolD from Pediococcus pentosaceus (strain ATCC 25745 / CCUG 21536 / LMG 10740 / 183-1w).